Reading from the N-terminus, the 324-residue chain is Histidine N-acetyltransferase (324 aa).

The N-acetyltransferase domain maps to 15–151 (FEFVLAAEKE…GILLLSFNAP (137 aa)).

The enzyme catalyses L-histidine + acetyl-CoA = N(alpha)-acetyl-L-histidine + CoA + H(+). Functionally, enzyme responsible for the N-acetyl-histidine (NAH) synthesis, which is a major constituent of brain and lens of ectothermic vertebrates. The polypeptide is Histidine N-acetyltransferase (hisat) (Xenopus tropicalis (Western clawed frog)).